A 176-amino-acid polypeptide reads, in one-letter code: Shikimate kinase (176 aa).

14 to 19 (GAGKST) provides a ligand contact to ATP. Ser-18 serves as a coordination point for Mg(2+). Residues Asp-36, Arg-60, and Gly-83 each contribute to the substrate site. Arg-121 is a binding site for ATP. Position 140 (Arg-140) interacts with substrate.

Belongs to the shikimate kinase family. Monomer. Requires Mg(2+) as cofactor.

The protein resides in the cytoplasm. The catalysed reaction is shikimate + ATP = 3-phosphoshikimate + ADP + H(+). It functions in the pathway metabolic intermediate biosynthesis; chorismate biosynthesis; chorismate from D-erythrose 4-phosphate and phosphoenolpyruvate: step 5/7. Functionally, catalyzes the specific phosphorylation of the 3-hydroxyl group of shikimic acid using ATP as a cosubstrate. The polypeptide is Shikimate kinase (Francisella philomiragia subsp. philomiragia (strain ATCC 25017 / CCUG 19701 / FSC 153 / O#319-036)).